The chain runs to 468 residues: tRNA modification GTPase MnmE (468 aa).

Positions 29, 97, and 136 each coordinate (6S)-5-formyl-5,6,7,8-tetrahydrofolate. The TrmE-type G domain maps to 232–390 (GFELAIVGRP…VVAHIVARME (159 aa)). Asparagine 242 serves as a coordination point for K(+). GTP is bound by residues 242–247 (NVGKSS), 261–267 (TDLAGTT), and 286–289 (DTAG). Serine 246 provides a ligand contact to Mg(2+). K(+) is bound by residues threonine 261, leucine 263, and threonine 266. Residue threonine 267 coordinates Mg(2+). Residue lysine 468 coordinates (6S)-5-formyl-5,6,7,8-tetrahydrofolate.

Belongs to the TRAFAC class TrmE-Era-EngA-EngB-Septin-like GTPase superfamily. TrmE GTPase family. Homodimer. Heterotetramer of two MnmE and two MnmG subunits. K(+) serves as cofactor.

The protein localises to the cytoplasm. In terms of biological role, exhibits a very high intrinsic GTPase hydrolysis rate. Involved in the addition of a carboxymethylaminomethyl (cmnm) group at the wobble position (U34) of certain tRNAs, forming tRNA-cmnm(5)s(2)U34. The protein is tRNA modification GTPase MnmE of Magnetococcus marinus (strain ATCC BAA-1437 / JCM 17883 / MC-1).